The chain runs to 202 residues: PXMP2/4 family protein 1 (202 aa).

4 consecutive transmembrane segments (helical) span residues 21–41, 54–72, 138–154, and 161–177; these read PVIT…TLAQ, LMMC…HFWF, KAWM…FRFV, and LISN…LSTV.

Belongs to the peroxisomal membrane protein PXMP2/4 family.

It is found in the membrane. The sequence is that of PXMP2/4 family protein 1 from Dictyostelium discoideum (Social amoeba).